A 163-amino-acid polypeptide reads, in one-letter code: uncharacterized protein (163 aa).

The helical transmembrane segment at leucine 11–leucine 31 threads the bilayer.

The protein localises to the membrane. This is an uncharacterized protein from Saccharomyces cerevisiae (strain ATCC 204508 / S288c) (Baker's yeast).